The sequence spans 137 residues: Integration host factor subunit beta (137 aa).

The span at 75 to 92 shows a compositional bias: basic and acidic residues; the sequence is KRVPHFKAGKELRERVDR. The interval 75–137 is disordered; it reads KRVPHFKAGK…EGGGLNLARS (63 aa). Residues 128 to 137 are compositionally biased toward gly residues; it reads EGGGLNLARS.

The protein belongs to the bacterial histone-like protein family. Heterodimer of an alpha and a beta chain.

In terms of biological role, this protein is one of the two subunits of integration host factor, a specific DNA-binding protein that functions in genetic recombination as well as in transcriptional and translational control. This is Integration host factor subunit beta from Cupriavidus pinatubonensis (strain JMP 134 / LMG 1197) (Cupriavidus necator (strain JMP 134)).